The chain runs to 890 residues: UPF0182 protein Ppro_2689 (890 aa).

7 consecutive transmembrane segments (helical) span residues 6 to 26 (FILI…LLAF), 50 to 70 (AGSG…NLLL), 102 to 122 (LGIP…AMQW), 157 to 177 (TITA…VLVY), 200 to 220 (LAIL…LDCF), 244 to 264 (TYRI…IGLW), and 266 to 286 (GAWR…VIGI).

It belongs to the UPF0182 family.

The protein localises to the cell membrane. This is UPF0182 protein Ppro_2689 from Pelobacter propionicus (strain DSM 2379 / NBRC 103807 / OttBd1).